The following is a 460-amino-acid chain: Proline--tRNA ligase (460 aa).

This sequence belongs to the class-II aminoacyl-tRNA synthetase family. ProS type 3 subfamily. In terms of assembly, homodimer.

Its subcellular location is the cytoplasm. The enzyme catalyses tRNA(Pro) + L-proline + ATP = L-prolyl-tRNA(Pro) + AMP + diphosphate. In terms of biological role, catalyzes the attachment of proline to tRNA(Pro) in a two-step reaction: proline is first activated by ATP to form Pro-AMP and then transferred to the acceptor end of tRNA(Pro). The chain is Proline--tRNA ligase from Methanococcus maripaludis (strain C5 / ATCC BAA-1333).